Reading from the N-terminus, the 72-residue chain is ATP synthase protein 8 (72 aa).

The chain crosses the membrane as a helical span at residues 16–36 (WTLIALFLLFSFLVVSVLPAV).

This sequence belongs to the ATPase protein 8 family. As to quaternary structure, F-type ATPases have 2 components, CF(1) - the catalytic core - and CF(0) - the membrane proton channel.

It localises to the mitochondrion membrane. Mitochondrial membrane ATP synthase (F(1)F(0) ATP synthase or Complex V) produces ATP from ADP in the presence of a proton gradient across the membrane which is generated by electron transport complexes of the respiratory chain. F-type ATPases consist of two structural domains, F(1) - containing the extramembraneous catalytic core and F(0) - containing the membrane proton channel, linked together by a central stalk and a peripheral stalk. During catalysis, ATP synthesis in the catalytic domain of F(1) is coupled via a rotary mechanism of the central stalk subunits to proton translocation. Part of the complex F(0) domain. Minor subunit located with subunit a in the membrane. The protein is ATP synthase protein 8 (MTATP8) of Metridium senile (Brown sea anemone).